Here is a 64-residue protein sequence, read N- to C-terminus: Long neurotoxin MS4 (64 aa).

5 cysteine pairs are disulfide-bonded: cysteine 3–cysteine 24, cysteine 6–cysteine 11, cysteine 17–cysteine 41, cysteine 45–cysteine 57, and cysteine 58–cysteine 63.

The protein belongs to the three-finger toxin family. Ancestral subfamily. Expressed by the venom gland.

The protein localises to the secreted. In terms of biological role, produces peripheral paralysis by blocking neuromuscular transmission at the postsynaptic site. Weak inhibitor of the endogenous nicotinic acetylcholine receptors (nAChR) in the human rhabdomyosarcoma TE 671 cell line with an IC(50) of 690 mM. This neurotoxin is lethal to zebrafish by injection at the back of the dorsolateral region, but is not toxic to mice by intraperitoneal injection. The protein is Long neurotoxin MS4 of Micrurus surinamensis (Surinam coral snake).